Reading from the N-terminus, the 85-residue chain is Phosphocarrier protein HPr (85 aa).

The HPr domain maps to 1 to 85; that stretch reads MFQNQVKITA…HLSLIMTELE (85 aa). The Pros-phosphohistidine intermediate role is filled by H15.

This sequence belongs to the HPr family.

The protein localises to the cytoplasm. In terms of biological role, general (non sugar-specific) component of the phosphoenolpyruvate-dependent sugar phosphotransferase system (sugar PTS). This major carbohydrate active-transport system catalyzes the phosphorylation of incoming sugar substrates concomitantly with their translocation across the cell membrane. The phosphoryl group from phosphoenolpyruvate (PEP) is transferred to the phosphoryl carrier protein HPr by enzyme I. Phospho-HPr then transfers it to the PTS EIIA domain. The sequence is that of Phosphocarrier protein HPr (ptsH) from Buchnera aphidicola subsp. Acyrthosiphon pisum (strain APS) (Acyrthosiphon pisum symbiotic bacterium).